A 601-amino-acid chain; its full sequence is AT-rich interactive domain-containing protein 3A (601 aa).

A disordered region spans residues 1 to 224; it reads MKLQAVMETL…HMASQMPPPD (224 aa). The span at 60–89 shows a compositional bias: low complexity; that stretch reads MAALAAMRAAAAGLGHPSSPGGSEDGPPIS. Residues Ser78, Ser82, and Ser89 each carry the phosphoserine modification. The residue at position 99 (Thr99) is a Phosphothreonine. Residue Ser102 is modified to Phosphoserine. The span at 114 to 123 shows a compositional bias: basic and acidic residues; sequence GHAEGDRHLM. Phosphoserine is present on Ser127. The segment at 128–165 is acidic; sequence DDDDTKSKWEEQELEELGEEEEEEEEEDDFEEEEEEEE. Over residues 139-166 the composition is skewed to acidic residues; that stretch reads QELEELGEEEEEEEEEDDFEEEEEEEEG. Residues 243-335 enclose the ARID domain; it reads DPKRKEFLDD…YLYPYECERR (93 aa). Phosphoserine is present on residues Ser358 and Ser367. Glycyl lysine isopeptide (Lys-Gly) (interchain with G-Cter in SUMO2) cross-links involve residues Lys403, Lys404, Lys457, and Lys467. The 98-residue stretch at 449 to 546 folds into the REKLES domain; sequence AALEQLREKL…GVLFAQPPPP (98 aa). Residues 450–493 are important for nuclear localization; it reads ALEQLREKLESTEPPEKKMALVADEQQRLMQRAVQQSFLAMTAQ. The segment at 495-518 is homodimerization; it reads PMNIRINSQASESRQDSAVSLTSA. Residues 542–562 form an important for cytoplasmic localization region; sequence QPPPPTAPSAPGKGGVSSIGT. Positions 545–601 are disordered; the sequence is PPTAPSAPGKGGVSSIGTNTTTGSRTGASGSTVSGGQVGLPGVSTPTMSSTSNNSLP. 2 stretches are compositionally biased toward low complexity: residues 559 to 579 and 588 to 601; these read SIGT…TVSG and STPT…NSLP.

Homodimer. Heterodimer with ARID3B. Interacts with E2F1. Interacts with GTF2I and BTK. As to expression, B-cell specific in the adult. Expressed in B-cell progenitors, down-regulated in the immature B-cell stage, and is up-regulated again at later stages of B-lymphocyte differentiation.

It localises to the nucleus. Its subcellular location is the cytoplasm. Transcription factor involved in B-cell differentiation. Binds a VH promoter proximal site necessary for induced mu-heavy-chain transcription. Binds the minor groove of a restricted ATC sequence that is sufficient for nuclear matrix association. This sequence motif is present in matrix-associating regions (MARS) proximal to the promoter and flanking E mu. Activates E mu-driven transcription by binding these sites. May be involved in the control of cell cycle progression by the RB1/E2F1 pathway. This chain is AT-rich interactive domain-containing protein 3A (Arid3a), found in Mus musculus (Mouse).